The primary structure comprises 208 residues: Thymidylate kinase (208 aa).

Position 10-17 (10-17 (GGEGAGKS)) interacts with ATP.

Belongs to the thymidylate kinase family.

It carries out the reaction dTMP + ATP = dTDP + ADP. Its function is as follows. Phosphorylation of dTMP to form dTDP in both de novo and salvage pathways of dTTP synthesis. This Alcanivorax borkumensis (strain ATCC 700651 / DSM 11573 / NCIMB 13689 / SK2) protein is Thymidylate kinase.